The following is a 277-amino-acid chain: Pantothenate synthetase (277 aa).

Methionine 26–histidine 33 provides a ligand contact to ATP. Histidine 33 serves as the catalytic Proton donor. Glutamine 57 provides a ligand contact to (R)-pantoate. Glutamine 57 provides a ligand contact to beta-alanine. Residue glycine 143–aspartate 146 participates in ATP binding. Residue glutamine 149 participates in (R)-pantoate binding. Residues valine 172 and leucine 180–arginine 183 each bind ATP.

Belongs to the pantothenate synthetase family. In terms of assembly, homodimer.

The protein resides in the cytoplasm. It carries out the reaction (R)-pantoate + beta-alanine + ATP = (R)-pantothenate + AMP + diphosphate + H(+). Its pathway is cofactor biosynthesis; (R)-pantothenate biosynthesis; (R)-pantothenate from (R)-pantoate and beta-alanine: step 1/1. Its function is as follows. Catalyzes the condensation of pantoate with beta-alanine in an ATP-dependent reaction via a pantoyl-adenylate intermediate. The sequence is that of Pantothenate synthetase from Nitrosomonas europaea (strain ATCC 19718 / CIP 103999 / KCTC 2705 / NBRC 14298).